Consider the following 296-residue polypeptide: MEQFRNIGIIGRLGSSQVLDTIRRLKKFLLDRHLHVILEDTIAEVLPGHGLQTSTRKLLGEVCDLVIVVGGDGSLLGAARALARHNIPVLGINRGNLGFLTDIRPDELEQKVAEVLDGHYLVENRFLLQAEVRRHHEAIGQGDALNDVVLHPGKSTRMIEFEIYIDGQFVCSQKADGLIVATPTGSTAYALSAGGPIMHPKLDAIVIVPMYPHTLSGRPIVVDGNSELKIVVSKDLQIYPQVSCDGQNHFTCAPGDTITVSKKPQKLRLIHPLDHNYYEVCRTKLGWGSRLGSSDD.

Asp72 (proton acceptor) is an active-site residue. Residues 72-73 (DG), 146-147 (ND), Arg157, Lys174, Asp176, 187-192 (TAYALS), and Gln247 contribute to the NAD(+) site.

It belongs to the NAD kinase family. A divalent metal cation serves as cofactor.

The protein localises to the cytoplasm. It catalyses the reaction NAD(+) + ATP = ADP + NADP(+) + H(+). Its function is as follows. Involved in the regulation of the intracellular balance of NAD and NADP, and is a key enzyme in the biosynthesis of NADP. Catalyzes specifically the phosphorylation on 2'-hydroxyl of the adenosine moiety of NAD to yield NADP. The protein is NAD kinase of Pseudomonas putida (strain ATCC 700007 / DSM 6899 / JCM 31910 / BCRC 17059 / LMG 24140 / F1).